A 114-amino-acid chain; its full sequence is Large ribosomal subunit protein uL18 (114 aa).

Belongs to the universal ribosomal protein uL18 family. In terms of assembly, part of the 50S ribosomal subunit; part of the 5S rRNA/L5/L18/L25 subcomplex. Contacts the 5S and 23S rRNAs.

Functionally, this is one of the proteins that bind and probably mediate the attachment of the 5S RNA into the large ribosomal subunit, where it forms part of the central protuberance. This chain is Large ribosomal subunit protein uL18, found in Bacteroides fragilis (strain ATCC 25285 / DSM 2151 / CCUG 4856 / JCM 11019 / LMG 10263 / NCTC 9343 / Onslow / VPI 2553 / EN-2).